Consider the following 391-residue polypeptide: Formate-dependent phosphoribosylglycinamide formyltransferase (391 aa).

N(1)-(5-phospho-beta-D-ribosyl)glycinamide-binding positions include 18-19 (EL) and Glu-78. Residues Arg-110, Lys-151, 156 to 161 (SSGKGQ), 191 to 194 (EEFI), and Glu-199 contribute to the ATP site. The region spanning 115–305 (DLASKDLKIK…EFELHLRAFL (191 aa)) is the ATP-grasp domain. Mg(2+)-binding residues include Glu-264 and Glu-276. Residues Asp-283, Lys-353, and 360–361 (RR) contribute to the N(1)-(5-phospho-beta-D-ribosyl)glycinamide site.

This sequence belongs to the PurK/PurT family. As to quaternary structure, homodimer.

The enzyme catalyses N(1)-(5-phospho-beta-D-ribosyl)glycinamide + formate + ATP = N(2)-formyl-N(1)-(5-phospho-beta-D-ribosyl)glycinamide + ADP + phosphate + H(+). The protein operates within purine metabolism; IMP biosynthesis via de novo pathway; N(2)-formyl-N(1)-(5-phospho-D-ribosyl)glycinamide from N(1)-(5-phospho-D-ribosyl)glycinamide (formate route): step 1/1. Involved in the de novo purine biosynthesis. Catalyzes the transfer of formate to 5-phospho-ribosyl-glycinamide (GAR), producing 5-phospho-ribosyl-N-formylglycinamide (FGAR). Formate is provided by PurU via hydrolysis of 10-formyl-tetrahydrofolate. This is Formate-dependent phosphoribosylglycinamide formyltransferase from Prochlorococcus marinus (strain MIT 9301).